Here is a 318-residue protein sequence, read N- to C-terminus: Acetyl-coenzyme A carboxylase carboxyl transferase subunit alpha (318 aa).

Residues 32-293 (NINEEIQRLE…REALREEWAR (262 aa)) form the CoA carboxyltransferase C-terminal domain.

Belongs to the AccA family. As to quaternary structure, acetyl-CoA carboxylase is a heterohexamer composed of biotin carboxyl carrier protein (AccB), biotin carboxylase (AccC) and two subunits each of ACCase subunit alpha (AccA) and ACCase subunit beta (AccD).

Its subcellular location is the cytoplasm. The enzyme catalyses N(6)-carboxybiotinyl-L-lysyl-[protein] + acetyl-CoA = N(6)-biotinyl-L-lysyl-[protein] + malonyl-CoA. Its pathway is lipid metabolism; malonyl-CoA biosynthesis; malonyl-CoA from acetyl-CoA: step 1/1. Its function is as follows. Component of the acetyl coenzyme A carboxylase (ACC) complex. First, biotin carboxylase catalyzes the carboxylation of biotin on its carrier protein (BCCP) and then the CO(2) group is transferred by the carboxyltransferase to acetyl-CoA to form malonyl-CoA. This chain is Acetyl-coenzyme A carboxylase carboxyl transferase subunit alpha, found in Halorhodospira halophila (strain DSM 244 / SL1) (Ectothiorhodospira halophila (strain DSM 244 / SL1)).